Consider the following 293-residue polypeptide: 4-hydroxy-tetrahydrodipicolinate synthase (293 aa).

A pyruvate-binding site is contributed by Thr-45. Tyr-133 acts as the Proton donor/acceptor in catalysis. Lys-161 (schiff-base intermediate with substrate) is an active-site residue. Ile-204 contributes to the pyruvate binding site.

Belongs to the DapA family. As to quaternary structure, homotetramer; dimer of dimers.

The protein resides in the cytoplasm. The enzyme catalyses L-aspartate 4-semialdehyde + pyruvate = (2S,4S)-4-hydroxy-2,3,4,5-tetrahydrodipicolinate + H2O + H(+). It participates in amino-acid biosynthesis; L-lysine biosynthesis via DAP pathway; (S)-tetrahydrodipicolinate from L-aspartate: step 3/4. Functionally, catalyzes the condensation of (S)-aspartate-beta-semialdehyde [(S)-ASA] and pyruvate to 4-hydroxy-tetrahydrodipicolinate (HTPA). The sequence is that of 4-hydroxy-tetrahydrodipicolinate synthase from Edwardsiella ictaluri (strain 93-146).